The following is a 426-amino-acid chain: Tetracenomycin polyketide synthase ketoacyl synthase alpha subunit (426 aa).

Residues glutamate 6 to arginine 420 enclose the Ketosynthase family 3 (KS3) domain. Catalysis depends on for beta-ketoacyl synthase activity residues cysteine 173, histidine 313, and histidine 350.

The protein belongs to the thiolase-like superfamily. Beta-ketoacyl-ACP synthases family. The tetracenomycin polyketide synthase (TCM PKS) is composed of a ketosynthase complex (TcmKL), an acyl carrier protein (TcmM), a cyclase (TcmN) and a probable second cyclase (TcmJ). TcmK and TcmL form a heterodimeric complex.

The catalysed reaction is 10 malonyl-CoA + 8 H(+) = tetracenomycin F2 + 10 CO2 + 10 CoA + 2 H2O. The protein operates within antibiotic biosynthesis; tetracenomycin C biosynthesis. In terms of biological role, involved in the biosynthesis of tetracenomycin C (TCM C). Part of a type II polyketide synthase (PKS) that catalyzes the synthesis of tetracenomycin F2 (TCM F2), a precursor of TCM C, from malonyl-CoA. TcmK and TcmL form a heterodimeric alpha-beta complex that catalyzes the condensation reactions between the growing acyl-enzyme chain and the malonyl-CoA extender units. The sequence is that of Tetracenomycin polyketide synthase ketoacyl synthase alpha subunit from Streptomyces glaucescens.